The sequence spans 67 residues: Conotoxin ArMLKM-01 (67 aa).

The first 24 residues, 1–24 (MLKMEVVLFTFLVLFPLSTLQLET), serve as a signal peptide directing secretion. Positions 25–51 (DQPVERYVENKQDLNPDESRNFMLPIV) are excised as a propeptide. Cystine bridges form between C54–C65, C55–C63, and C58–C66.

Belongs to the conotoxin M superfamily. In terms of tissue distribution, expressed by the venom duct.

The protein resides in the secreted. The sequence is that of Conotoxin ArMLKM-01 from Conus arenatus (Sand-dusted cone).